Here is a 564-residue protein sequence, read N- to C-terminus: Arginine--tRNA ligase (564 aa).

The 'HIGH' region signature appears at Ala130 to His140.

The protein belongs to the class-I aminoacyl-tRNA synthetase family. Monomer.

The protein resides in the cytoplasm. The enzyme catalyses tRNA(Arg) + L-arginine + ATP = L-arginyl-tRNA(Arg) + AMP + diphosphate. This is Arginine--tRNA ligase from Malacoplasma penetrans (strain HF-2) (Mycoplasma penetrans).